The following is a 377-amino-acid chain: UPF0754 membrane protein RBAM_010020 (377 aa).

The next 2 helical transmembrane spans lie at 1–21 (MGIA…GAVT) and 357–377 (YLGG…VILF).

This sequence belongs to the UPF0754 family.

It localises to the cell membrane. This chain is UPF0754 membrane protein RBAM_010020, found in Bacillus velezensis (strain DSM 23117 / BGSC 10A6 / LMG 26770 / FZB42) (Bacillus amyloliquefaciens subsp. plantarum).